We begin with the raw amino-acid sequence, 886 residues long: DNA mismatch repair protein MutS (886 aa).

641 to 648 is an ATP binding site; the sequence is GPNMAGKS.

This sequence belongs to the DNA mismatch repair MutS family.

In terms of biological role, this protein is involved in the repair of mismatches in DNA. It is possible that it carries out the mismatch recognition step. This protein has a weak ATPase activity. This chain is DNA mismatch repair protein MutS, found in Rickettsia felis (strain ATCC VR-1525 / URRWXCal2) (Rickettsia azadi).